The sequence spans 273 residues: Formamidopyrimidine-DNA glycosylase (273 aa).

Catalysis depends on proline 2, which acts as the Schiff-base intermediate with DNA. Glutamate 3 acts as the Proton donor in catalysis. Lysine 60 acts as the Proton donor; for beta-elimination activity in catalysis. DNA is bound by residues histidine 94, arginine 113, and arginine 154. The FPG-type zinc finger occupies 239–273; sequence NAYDREGQPCPRCGATIIKTVVAQRGTHYCPECQR. Arginine 263 (proton donor; for delta-elimination activity) is an active-site residue.

Belongs to the FPG family. Monomer. Zn(2+) is required as a cofactor.

The enzyme catalyses Hydrolysis of DNA containing ring-opened 7-methylguanine residues, releasing 2,6-diamino-4-hydroxy-5-(N-methyl)formamidopyrimidine.. The catalysed reaction is 2'-deoxyribonucleotide-(2'-deoxyribose 5'-phosphate)-2'-deoxyribonucleotide-DNA = a 3'-end 2'-deoxyribonucleotide-(2,3-dehydro-2,3-deoxyribose 5'-phosphate)-DNA + a 5'-end 5'-phospho-2'-deoxyribonucleoside-DNA + H(+). Involved in base excision repair of DNA damaged by oxidation or by mutagenic agents. Acts as a DNA glycosylase that recognizes and removes damaged bases. Has a preference for oxidized purines, such as 7,8-dihydro-8-oxoguanine (8-oxoG). Has AP (apurinic/apyrimidinic) lyase activity and introduces nicks in the DNA strand. Cleaves the DNA backbone by beta-delta elimination to generate a single-strand break at the site of the removed base with both 3'- and 5'-phosphates. The protein is Formamidopyrimidine-DNA glycosylase of Roseiflexus sp. (strain RS-1).